The sequence spans 247 residues: tRNA uridine(34) hydroxylase (247 aa).

Residues 124–218 (TKQNVIVIDT…YLEDTHNKNN (95 aa)) form the Rhodanese domain. Residue C178 is the Cysteine persulfide intermediate of the active site.

It belongs to the TrhO family.

It catalyses the reaction uridine(34) in tRNA + AH2 + O2 = 5-hydroxyuridine(34) in tRNA + A + H2O. In terms of biological role, catalyzes oxygen-dependent 5-hydroxyuridine (ho5U) modification at position 34 in tRNAs. The protein is tRNA uridine(34) hydroxylase of Rickettsia typhi (strain ATCC VR-144 / Wilmington).